We begin with the raw amino-acid sequence, 179 residues long: Protein GrpE (179 aa).

The interval 1–45 (MSEEKLTQDPTAEEEQTETADQQESADVNWEQEAAHWKAQAEEHQ) is disordered. Residues 33–45 (EAAHWKAQAEEHQ) are compositionally biased toward basic and acidic residues.

It belongs to the GrpE family. As to quaternary structure, homodimer.

Its subcellular location is the cytoplasm. In terms of biological role, participates actively in the response to hyperosmotic and heat shock by preventing the aggregation of stress-denatured proteins, in association with DnaK and GrpE. It is the nucleotide exchange factor for DnaK and may function as a thermosensor. Unfolded proteins bind initially to DnaJ; upon interaction with the DnaJ-bound protein, DnaK hydrolyzes its bound ATP, resulting in the formation of a stable complex. GrpE releases ADP from DnaK; ATP binding to DnaK triggers the release of the substrate protein, thus completing the reaction cycle. Several rounds of ATP-dependent interactions between DnaJ, DnaK and GrpE are required for fully efficient folding. This chain is Protein GrpE, found in Brevibacillus choshinensis.